The following is a 145-amino-acid chain: uncharacterized protein (145 aa).

3 consecutive transmembrane segments (helical) span residues 3-23 (VGII…GIGG), 83-103 (YVID…YLVP), and 105-125 (LSLL…MLWI).

It is found in the cell membrane. This is an uncharacterized protein from Methanocaldococcus jannaschii (strain ATCC 43067 / DSM 2661 / JAL-1 / JCM 10045 / NBRC 100440) (Methanococcus jannaschii).